The primary structure comprises 880 residues: Alanine--tRNA ligase (880 aa).

Zn(2+)-binding residues include histidine 568, histidine 572, cysteine 670, and histidine 674.

This sequence belongs to the class-II aminoacyl-tRNA synthetase family. Zn(2+) serves as cofactor.

It is found in the cytoplasm. It carries out the reaction tRNA(Ala) + L-alanine + ATP = L-alanyl-tRNA(Ala) + AMP + diphosphate. In terms of biological role, catalyzes the attachment of alanine to tRNA(Ala) in a two-step reaction: alanine is first activated by ATP to form Ala-AMP and then transferred to the acceptor end of tRNA(Ala). Also edits incorrectly charged Ser-tRNA(Ala) and Gly-tRNA(Ala) via its editing domain. In Ligilactobacillus salivarius (strain UCC118) (Lactobacillus salivarius), this protein is Alanine--tRNA ligase.